The sequence spans 517 residues: 2,3-bisphosphoglycerate-independent phosphoglycerate mutase (517 aa).

Residues Asp-12 and Ser-62 each coordinate Mn(2+). Ser-62 acts as the Phosphoserine intermediate in catalysis. Residues His-123, 153–154 (RD), Arg-185, Arg-191, 261–264 (RSDR), and Lys-336 each bind substrate. Asp-403, His-407, Asp-444, His-445, and His-463 together coordinate Mn(2+).

The protein belongs to the BPG-independent phosphoglycerate mutase family. In terms of assembly, monomer. The cofactor is Mn(2+).

It catalyses the reaction (2R)-2-phosphoglycerate = (2R)-3-phosphoglycerate. It participates in carbohydrate degradation; glycolysis; pyruvate from D-glyceraldehyde 3-phosphate: step 3/5. Catalyzes the interconversion of 2-phosphoglycerate and 3-phosphoglycerate. The protein is 2,3-bisphosphoglycerate-independent phosphoglycerate mutase of Methylobacillus flagellatus (strain ATCC 51484 / DSM 6875 / VKM B-1610 / KT).